We begin with the raw amino-acid sequence, 383 residues long: Acetylornithine deacetylase (383 aa).

Position 80 (His-80) interacts with Zn(2+). The active site involves Asp-82. Asp-112 contacts Zn(2+). Glu-144 is an active-site residue. Zn(2+) is bound by residues Glu-145, Glu-169, and His-355.

The protein belongs to the peptidase M20A family. ArgE subfamily. Homodimer. Zn(2+) is required as a cofactor. It depends on Co(2+) as a cofactor. Requires glutathione as cofactor.

The protein resides in the cytoplasm. It carries out the reaction N(2)-acetyl-L-ornithine + H2O = L-ornithine + acetate. It participates in amino-acid biosynthesis; L-arginine biosynthesis; L-ornithine from N(2)-acetyl-L-ornithine (linear): step 1/1. Functionally, catalyzes the hydrolysis of the amide bond of N(2)-acetylated L-amino acids. Cleaves the acetyl group from N-acetyl-L-ornithine to form L-ornithine, an intermediate in L-arginine biosynthesis pathway, and a branchpoint in the synthesis of polyamines. This chain is Acetylornithine deacetylase, found in Shigella boydii serotype 4 (strain Sb227).